Reading from the N-terminus, the 133-residue chain is Small ribosomal subunit protein uS9 (133 aa).

Residues 95–113 are compositionally biased toward basic and acidic residues; sequence GDSKQELKSRGFLTRDPRK. Residues 95–133 form a disordered region; it reads GDSKQELKSRGFLTRDPRKKERKKYGHKKARKSFQFSKR. Residues 114–133 show a composition bias toward basic residues; the sequence is KERKKYGHKKARKSFQFSKR.

It belongs to the universal ribosomal protein uS9 family.

The protein is Small ribosomal subunit protein uS9 of Chlamydia felis (strain Fe/C-56) (Chlamydophila felis).